Here is a 396-residue protein sequence, read N- to C-terminus: Elongation factor Tu (396 aa).

Residues 10 to 206 form the tr-type G domain; the sequence is KPHCNIGTIG…AVDAYIPQPE (197 aa). The tract at residues 19–26 is G1; that stretch reads GHVDHGKT. A GTP-binding site is contributed by 19–26; the sequence is GHVDHGKT. Residue Thr-26 participates in Mg(2+) binding. The segment at 60 to 64 is G2; the sequence is GITIS. The segment at 81–84 is G3; sequence DCPG. Residues 81-85 and 136-139 each bind GTP; these read DCPGH and NKCD. The segment at 136–139 is G4; the sequence is NKCD. The G5 stretch occupies residues 174-176; sequence SAL.

Belongs to the TRAFAC class translation factor GTPase superfamily. Classic translation factor GTPase family. EF-Tu/EF-1A subfamily. In terms of assembly, monomer.

It localises to the cytoplasm. It carries out the reaction GTP + H2O = GDP + phosphate + H(+). Its function is as follows. GTP hydrolase that promotes the GTP-dependent binding of aminoacyl-tRNA to the A-site of ribosomes during protein biosynthesis. The chain is Elongation factor Tu from Nitrobacter winogradskyi (strain ATCC 25391 / DSM 10237 / CIP 104748 / NCIMB 11846 / Nb-255).